Consider the following 108-residue polypeptide: Cell wall protein PGA48 (108 aa).

Residues 1 to 17 form the signal peptide; the sequence is MFKFVIYLFTFIAFANA. 3 N-linked (GlcNAc...) asparagine glycosylation sites follow: asparagine 18, asparagine 41, and asparagine 77. Residue asparagine 84 is the site of GPI-anchor amidated asparagine attachment. The propeptide at 85 to 108 is removed in mature form; it reads GASKLNLRSLAGAGLVAAIFIAFI.

Belongs to the SED1 family. Post-translationally, the GPI-anchor is attached to the protein in the endoplasmic reticulum and serves to target the protein to the cell surface. There, the glucosamine-inositol phospholipid moiety is cleaved off and the GPI-modified mannoprotein is covalently attached via its lipidless GPI glycan remnant to the 1,6-beta-glucan of the outer cell wall layer.

Its subcellular location is the secreted. The protein resides in the cell wall. The protein localises to the membrane. Functionally, cell wall protein that plays a role in adaptation and resistance to cell wall stress. The chain is Cell wall protein PGA48 (PGA48) from Candida albicans (strain SC5314 / ATCC MYA-2876) (Yeast).